Here is a 275-residue protein sequence, read N- to C-terminus: Exosome complex component RRP40 (275 aa).

Alanine 2 is modified (N-acetylalanine). Lysine 151 participates in a covalent cross-link: Glycyl lysine isopeptide (Lys-Gly) (interchain with G-Cter in SUMO2).

It belongs to the RRP40 family. In terms of assembly, component of the RNA exosome core complex (Exo-9), composed of EXOSC1, EXOSC2, EXOSC3, EXOSC4, EXOSC5, EXOSC6, EXOSC7, EXOSC8 and EXOSC9; within the complex interacts with EXOSC5 and EXOSC9. The catalytically inactive RNA exosome core complex (Exo-9) associates with the catalytic subunit EXOSC10/RRP6. Exo-9 may associate with DIS3 to form the nucleolar exosome complex, or DIS3L to form the cytoplasmic exosome complex. Exo-9 is formed by a hexameric base ring consisting of the heterodimers EXOSC4-EXOSC9, EXOSC5-EXOSC8 and EXOSC6-EXOSC7, and a cap ring consisting of EXOSC1, EXOSC2 and EXOSC3. The RNA exosome complex associates with cofactors C1D/RRP47, MPHOSPH6/MPP6 and MTREX/MTR4. Interacts with MPHOSPH6/MPP6; the interaction is direct. Interacts with GTPBP1. Interacts with ZC3HAV1. Interacts with DDX17 only in the presence of ZC3HAV1 in an RNA-independent manner. Interacts with DHX36; this interaction occurs in a RNase-insensitive manner. Interacts with HBS1L isoform 2.

The protein localises to the cytoplasm. The protein resides in the nucleus. It localises to the nucleolus. Functionally, non-catalytic component of the RNA exosome complex which has 3'-&gt;5' exoribonuclease activity and participates in a multitude of cellular RNA processing and degradation events. In the nucleus, the RNA exosome complex is involved in proper maturation of stable RNA species such as rRNA, snRNA and snoRNA, in the elimination of RNA processing by-products and non-coding 'pervasive' transcripts, such as antisense RNA species and promoter-upstream transcripts (PROMPTs), and of mRNAs with processing defects, thereby limiting or excluding their export to the cytoplasm. The RNA exosome may be involved in Ig class switch recombination (CSR) and/or Ig variable region somatic hypermutation (SHM) by targeting AICDA deamination activity to transcribed dsDNA substrates. In the cytoplasm, the RNA exosome complex is involved in general mRNA turnover and specifically degrades inherently unstable mRNAs containing AU-rich elements (AREs) within their 3' untranslated regions, and in RNA surveillance pathways, preventing translation of aberrant mRNAs. It seems to be involved in degradation of histone mRNA. The catalytic inactive RNA exosome core complex of 9 subunits (Exo-9) is proposed to play a pivotal role in the binding and presentation of RNA for ribonucleolysis, and to serve as a scaffold for the association with catalytic subunits and accessory proteins or complexes. EXOSC3 as peripheral part of the Exo-9 complex stabilizes the hexameric ring of RNase PH-domain subunits through contacts with EXOSC9 and EXOSC5. The chain is Exosome complex component RRP40 (EXOSC3) from Bos taurus (Bovine).